We begin with the raw amino-acid sequence, 488 residues long: Ribulose bisphosphate carboxylase large chain 1 (488 aa).

Residues Asn127 and Thr177 each contribute to the substrate site. The Proton acceptor role is filled by Lys179. A substrate-binding site is contributed by Lys181. Residues Lys205, Asp207, and Glu208 each coordinate Mg(2+). At Lys205 the chain carries N6-carboxylysine. Residue His297 is the Proton acceptor of the active site. Substrate-binding residues include Arg298, His330, and Ser382.

The protein belongs to the RuBisCO large chain family. Type I subfamily. In terms of assembly, heterohexadecamer of 8 large chains and 8 small chains. Mg(2+) is required as a cofactor.

The enzyme catalyses 2 (2R)-3-phosphoglycerate + 2 H(+) = D-ribulose 1,5-bisphosphate + CO2 + H2O. It catalyses the reaction D-ribulose 1,5-bisphosphate + O2 = 2-phosphoglycolate + (2R)-3-phosphoglycerate + 2 H(+). Functionally, ruBisCO catalyzes two reactions: the carboxylation of D-ribulose 1,5-bisphosphate, the primary event in carbon dioxide fixation, as well as the oxidative fragmentation of the pentose substrate. Both reactions occur simultaneously and in competition at the same active site. The chain is Ribulose bisphosphate carboxylase large chain 1 from Bradyrhizobium sp. (strain BTAi1 / ATCC BAA-1182).